The primary structure comprises 141 residues: Terrelysin (141 aa).

The protein belongs to the aegerolysin family.

It is found in the cytoplasm. In terms of biological role, hemolysins are potential virulence factors. Has hemolytic activity against sheep erythrocytes in vitro. This is Terrelysin from Aspergillus terreus (strain NIH 2624 / FGSC A1156).